A 242-amino-acid chain; its full sequence is Biosynthetic peptidoglycan transglycosylase (242 aa).

The chain crosses the membrane as a helical span at residues 19–39; sequence LMVVLAIFWGGGIALFSVAPV.

It belongs to the glycosyltransferase 51 family.

The protein localises to the cell inner membrane. The catalysed reaction is [GlcNAc-(1-&gt;4)-Mur2Ac(oyl-L-Ala-gamma-D-Glu-L-Lys-D-Ala-D-Ala)](n)-di-trans,octa-cis-undecaprenyl diphosphate + beta-D-GlcNAc-(1-&gt;4)-Mur2Ac(oyl-L-Ala-gamma-D-Glu-L-Lys-D-Ala-D-Ala)-di-trans,octa-cis-undecaprenyl diphosphate = [GlcNAc-(1-&gt;4)-Mur2Ac(oyl-L-Ala-gamma-D-Glu-L-Lys-D-Ala-D-Ala)](n+1)-di-trans,octa-cis-undecaprenyl diphosphate + di-trans,octa-cis-undecaprenyl diphosphate + H(+). The protein operates within cell wall biogenesis; peptidoglycan biosynthesis. In terms of biological role, peptidoglycan polymerase that catalyzes glycan chain elongation from lipid-linked precursors. The chain is Biosynthetic peptidoglycan transglycosylase from Escherichia coli O45:K1 (strain S88 / ExPEC).